We begin with the raw amino-acid sequence, 254 residues long: 3-deoxy-manno-octulosonate cytidylyltransferase (254 aa).

It belongs to the KdsB family.

The protein resides in the cytoplasm. It catalyses the reaction 3-deoxy-alpha-D-manno-oct-2-ulosonate + CTP = CMP-3-deoxy-beta-D-manno-octulosonate + diphosphate. It functions in the pathway nucleotide-sugar biosynthesis; CMP-3-deoxy-D-manno-octulosonate biosynthesis; CMP-3-deoxy-D-manno-octulosonate from 3-deoxy-D-manno-octulosonate and CTP: step 1/1. Its pathway is bacterial outer membrane biogenesis; lipopolysaccharide biosynthesis. Activates KDO (a required 8-carbon sugar) for incorporation into bacterial lipopolysaccharide in Gram-negative bacteria. This is 3-deoxy-manno-octulosonate cytidylyltransferase from Polynucleobacter necessarius subsp. necessarius (strain STIR1).